We begin with the raw amino-acid sequence, 178 residues long: Protein GrpE (178 aa).

The protein belongs to the GrpE family. As to quaternary structure, homodimer.

It is found in the cytoplasm. Its function is as follows. Participates actively in the response to hyperosmotic and heat shock by preventing the aggregation of stress-denatured proteins, in association with DnaK and GrpE. It is the nucleotide exchange factor for DnaK and may function as a thermosensor. Unfolded proteins bind initially to DnaJ; upon interaction with the DnaJ-bound protein, DnaK hydrolyzes its bound ATP, resulting in the formation of a stable complex. GrpE releases ADP from DnaK; ATP binding to DnaK triggers the release of the substrate protein, thus completing the reaction cycle. Several rounds of ATP-dependent interactions between DnaJ, DnaK and GrpE are required for fully efficient folding. In Rickettsia akari (strain Hartford), this protein is Protein GrpE.